The chain runs to 499 residues: Serine carboxypeptidase 1 (499 aa).

Residues 1 to 30 (MARCRRRSGCTAGAALLLLLALALSGGGGA) form the signal peptide. Cystine bridges form between C92–C388, C256–C268, and C291–C355. N148 is a glycosylation site (N-linked (GlcNAc...) asparagine). S188 is a catalytic residue. The N-linked (GlcNAc...) asparagine glycan is linked to N262. Positions 297–351 (IKEVNLQNSKLPQSFKDLGTTNKPFPVRTRMLGRAWPLRAPVKAGRVPSWQEVAS) are cleaved as a propeptide — linker peptide. An N-linked (GlcNAc...) asparagine glycan is attached at N407. Residues D423 and H476 contribute to the active site. The Microbody targeting signal motif lies at 497–499 (SKL).

This sequence belongs to the peptidase S10 family. In terms of assembly, carboxypeptidase I is a dimer, where each monomer is composed of two chains linked by disulfide bonds. The linker peptide is endoproteolytically excised during enzyme maturation.

The protein localises to the secreted. The enzyme catalyses Release of a C-terminal amino acid with broad specificity.. In terms of biological role, may be involved in the degradation of small peptides (2-5 residues) or in the degradation of storage proteins in the embryo. The chain is Serine carboxypeptidase 1 (CBP1) from Hordeum vulgare (Barley).